A 305-amino-acid polypeptide reads, in one-letter code: NDP-polyphosphate phosphotransferase 1 (305 aa).

The protein belongs to the polyphosphate kinase 2 (PPK2) family. Class I subfamily.

It catalyses the reaction [phosphate](n) + ATP = [phosphate](n+1) + ADP. The catalysed reaction is [phosphate](n) + CTP = [phosphate](n+1) + CDP. The enzyme catalyses [phosphate](n) + GTP = [phosphate](n+1) + GDP. It carries out the reaction [phosphate](n) + UTP = [phosphate](n+1) + UDP. With respect to regulation, shows little dependence on metals. Uses inorganic polyphosphate (polyP) as a donor to convert NDP to NTP. PolyP hydrolysis is slightly faster with GDP, but it can also use ADP, CDP and UDP. In Ruegeria pomeroyi (strain ATCC 700808 / DSM 15171 / DSS-3) (Silicibacter pomeroyi), this protein is NDP-polyphosphate phosphotransferase 1.